The following is a 422-amino-acid chain: UDP-N-acetylglucosamine 1-carboxyvinyltransferase (422 aa).

22–23 contributes to the phosphoenolpyruvate binding site; the sequence is KN. UDP-N-acetyl-alpha-D-glucosamine is bound at residue Arg-93. Cys-117 serves as the catalytic Proton donor. 2-(S-cysteinyl)pyruvic acid O-phosphothioketal is present on Cys-117. UDP-N-acetyl-alpha-D-glucosamine contacts are provided by residues 122-126, Asp-309, and Ile-331; that span reads RPVDQ.

Belongs to the EPSP synthase family. MurA subfamily.

The protein localises to the cytoplasm. It catalyses the reaction phosphoenolpyruvate + UDP-N-acetyl-alpha-D-glucosamine = UDP-N-acetyl-3-O-(1-carboxyvinyl)-alpha-D-glucosamine + phosphate. Its pathway is cell wall biogenesis; peptidoglycan biosynthesis. Functionally, cell wall formation. Adds enolpyruvyl to UDP-N-acetylglucosamine. This chain is UDP-N-acetylglucosamine 1-carboxyvinyltransferase, found in Delftia acidovorans (strain DSM 14801 / SPH-1).